A 211-amino-acid chain; its full sequence is N-(5'-phosphoribosyl)anthranilate isomerase (211 aa).

The protein belongs to the TrpF family.

It catalyses the reaction N-(5-phospho-beta-D-ribosyl)anthranilate = 1-(2-carboxyphenylamino)-1-deoxy-D-ribulose 5-phosphate. It functions in the pathway amino-acid biosynthesis; L-tryptophan biosynthesis; L-tryptophan from chorismate: step 3/5. This chain is N-(5'-phosphoribosyl)anthranilate isomerase, found in Zymomonas mobilis subsp. mobilis (strain ATCC 31821 / ZM4 / CP4).